Here is a 460-residue protein sequence, read N- to C-terminus: Argininosuccinate lyase (460 aa).

This sequence belongs to the lyase 1 family. Argininosuccinate lyase subfamily.

It is found in the cytoplasm. The catalysed reaction is 2-(N(omega)-L-arginino)succinate = fumarate + L-arginine. The protein operates within amino-acid biosynthesis; L-arginine biosynthesis; L-arginine from L-ornithine and carbamoyl phosphate: step 3/3. This chain is Argininosuccinate lyase, found in Alkaliphilus metalliredigens (strain QYMF).